A 147-amino-acid chain; its full sequence is UPF0179 protein NP_3406A (147 aa).

The protein belongs to the UPF0179 family.

This chain is UPF0179 protein NP_3406A, found in Natronomonas pharaonis (strain ATCC 35678 / DSM 2160 / CIP 103997 / JCM 8858 / NBRC 14720 / NCIMB 2260 / Gabara) (Halobacterium pharaonis).